The following is a 363-amino-acid chain: Protein-glutamate methylesterase/protein-glutamine glutaminase 2 (363 aa).

Positions 6-123 (RVLIVDDSAS…AQFLLESKIH (118 aa)) constitute a Response regulatory domain. The residue at position 57 (aspartate 57) is a 4-aspartylphosphate. Positions 172 to 363 (ARTTESVICI…AMEILRAGNR (192 aa)) constitute a CheB-type methylesterase domain. Catalysis depends on residues serine 184, histidine 210, and aspartate 306.

It belongs to the CheB family. Post-translationally, phosphorylated by CheA. Phosphorylation of the N-terminal regulatory domain activates the methylesterase activity.

Its subcellular location is the cytoplasm. The catalysed reaction is [protein]-L-glutamate 5-O-methyl ester + H2O = L-glutamyl-[protein] + methanol + H(+). The enzyme catalyses L-glutaminyl-[protein] + H2O = L-glutamyl-[protein] + NH4(+). Its function is as follows. Involved in chemotaxis. Part of a chemotaxis signal transduction system that modulates chemotaxis in response to various stimuli. Catalyzes the demethylation of specific methylglutamate residues introduced into the chemoreceptors (methyl-accepting chemotaxis proteins or MCP) by CheR. Also mediates the irreversible deamidation of specific glutamine residues to glutamic acid. In Rhodospirillum rubrum (strain ATCC 11170 / ATH 1.1.1 / DSM 467 / LMG 4362 / NCIMB 8255 / S1), this protein is Protein-glutamate methylesterase/protein-glutamine glutaminase 2.